A 528-amino-acid polypeptide reads, in one-letter code: Protein spinster homolog 1 (528 aa).

The tract at residues 1-49 (MAGSDTAPFLSQADDPDDGPVPGTPGLPGSTGNPKSEEPEVPDQEGLQR) is disordered. Alanine 2 carries the N-acetylalanine modification. 12 helical membrane-spanning segments follow: residues 50–70 (ITGL…YINL), 98–118 (GLIQ…FGYL), 127–147 (LMCG…FIPG), 160–180 (VGVG…DLFV), 187–207 (MLSI…IAGS), 218–238 (WALR…FLVV), 278–298 (LGFT…PAFL), 323–343 (LIFG…GVEI), 357–377 (LVCA…LACA), 381–401 (IVAT…NWAI), 421–441 (FQIV…IGLI), and 465–485 (MLCA…AIFI). Serine 518 is modified (phosphoserine).

It belongs to the major facilitator superfamily. Spinster (TC 2.A.1.49) family. In terms of assembly, interacts with BCL2 and BCL2L1.

The protein localises to the lysosome membrane. Its subcellular location is the mitochondrion inner membrane. It carries out the reaction a 1-acyl-sn-glycero-3-phosphocholine(out) + H(+)(out) = a 1-acyl-sn-glycero-3-phosphocholine(in) + H(+)(in). The catalysed reaction is 1-hexadecanoyl-sn-glycero-3-phosphocholine(out) + H(+)(out) = 1-hexadecanoyl-sn-glycero-3-phosphocholine(in) + H(+)(in). It catalyses the reaction 1-(9Z-octadecenoyl)-sn-glycero-3-phosphocholine(out) + H(+)(out) = 1-(9Z-octadecenoyl)-sn-glycero-3-phosphocholine(in) + H(+)(in). The enzyme catalyses 1-(5Z,8Z,11Z,14Z-eicosatetraenoyl)-sn-glycero-3-phosphocholine(out) + H(+)(out) = 1-(5Z,8Z,11Z,14Z-eicosatetraenoyl)-sn-glycero-3-phosphocholine(in) + H(+)(in). It carries out the reaction 1-(4Z,7Z,10Z,13Z,16Z,19Z-docosahexaenoyl)-sn-glycero-3-phosphocholine(out) + H(+)(out) = 1-(4Z,7Z,10Z,13Z,16Z,19Z-docosahexaenoyl)-sn-glycero-3-phosphocholine(in) + H(+)(in). The catalysed reaction is a 1-acyl-sn-glycero-3-phosphoethanolamine(out) + H(+)(out) = a 1-acyl-sn-glycero-3-phosphoethanolamine(in) + H(+)(in). It catalyses the reaction 1-(9Z-octadecenoyl)-sn-glycero-3-phosphoethanolamine(out) + H(+)(out) = 1-(9Z-octadecenoyl)-sn-glycero-3-phosphoethanolamine(in) + H(+)(in). The enzyme catalyses 1-acyl-sn-glycero-3-phospho-(1'-sn-glycerol)(out) + H(+)(out) = 1-acyl-sn-glycero-3-phospho-(1'-sn-glycerol)(in) + H(+)(in). It carries out the reaction 1-(9Z-octadecenoyl)-sn-glycero-3-phospho-(1'-sn-glycerol)(out) + H(+)(out) = 1-(9Z-octadecenoyl)-sn-glycero-3-phospho-(1'-sn-glycerol)(in) + H(+)(in). The catalysed reaction is a 1-O-(1Z-alkenyl)-sn-glycero-3-phosphocholine(out) + H(+)(out) = a 1-O-(1Z-alkenyl)-sn-glycero-3-phosphocholine(in) + H(+)(in). It catalyses the reaction 1-(1Z-hexadecenyl)-sn-glycero-3-phosphocholine(out) + H(+)(out) = 1-(1Z-hexadecenyl)-sn-glycero-3-phosphocholine(in) + H(+)(in). The enzyme catalyses a 1-O-(1Z-alkenyl)-sn-glycero-3-phosphoethanolamine(out) + H(+)(out) = a 1-O-(1Z-alkenyl)-sn-glycero-3-phosphoethanolamine(in) + H(+)(in). It carries out the reaction 1-O-(1Z-hexadecenyl)-sn-glycero-3-phosphoethanolamine(out) + H(+)(out) = 1-O-(1Z-hexadecenyl)-sn-glycero-3-phosphoethanolamine(in) + H(+)(in). Functionally, plays a critical role in the phospholipid salvage pathway from lysosomes to the cytosol. Mediates the rate-limiting, proton-dependent, lysosomal efflux of lysophospholipids, which can then be reacylated by acyltransferases in the endoplasmic reticulum to form phospholipids. Selective for zwitterionic headgroups such as lysophosphatidylcholine (LPC) and lysophosphatidylethanolamine (LPE), can also transport lysophosphatidylglycerol (LPG), but not other anionic lysophospholipids, sphingosine, nor sphingomyelin. Transports lysophospholipids with saturated, monounsaturated, and polyunsaturated fatty acids, such as 1-hexadecanoyl-sn-glycero-3-phosphocholine, 1-(9Z-octadecenoyl)-sn-glycero-3-phosphocholine and 1-(4Z,7Z,10Z,13Z,16Z,19Z-docosahexaenoyl)-sn-glycero-3-phosphocholine, respectively. Can also transport lysoplasmalogen (LPC with a fatty alcohol) such as 1-(1Z-hexadecenyl)-sn-glycero-3-phosphocholine. Lysosomal LPC could function as intracellular signaling messenger. Essential player in lysosomal homeostasis. Crucial for cell survival under conditions of nutrient limitation. May be involved in necrotic or autophagic cell death. This chain is Protein spinster homolog 1 (SPNS1), found in Homo sapiens (Human).